A 560-amino-acid polypeptide reads, in one-letter code: MFS siderochrome iron transporter 1 (560 aa).

An N-linked (GlcNAc...) asparagine glycan is attached at asparagine 29. 11 helical membrane-spanning segments follow: residues 53–73, 90–110, 115–135, 146–166, 177–194, 211–231, 264–284, 291–311, 331–351, 354–374, and 379–399; these read LWLT…LVSV, LLAS…LTLA, VWGR…ALIM, VAAH…VDVM, MIMF…TFAG, FGAF…IMLF, VVGI…FSIV, WATG…AIFL, PTII…LLTI, AGYV…GIGL, and FKWA…LLIP. N-linked (GlcNAc...) asparagine glycosylation occurs at asparagine 404. A run of 3 helical transmembrane segments spans residues 407–427, 441–461, and 522–542; these read IGAV…FSVC, VAVV…VGLA, and VIAG…WRNV.

This sequence belongs to the major facilitator superfamily.

The protein resides in the membrane. Major facilitator transporter involved in siderophore transport. The protein is MFS siderochrome iron transporter 1 of Ajellomyces capsulatus (Darling's disease fungus).